The following is a 431-amino-acid chain: 5'-deoxyadenosine deaminase (431 aa).

Residues histidine 65 and histidine 67 each coordinate Zn(2+). Substrate contacts are provided by glutamate 94 and histidine 185. Histidine 212 is a Zn(2+) binding site. Substrate contacts are provided by glutamate 215 and aspartate 300. Aspartate 300 lines the Zn(2+) pocket.

It belongs to the metallo-dependent hydrolases superfamily. MTA/SAH deaminase family. As to quaternary structure, homotetramer. Requires Zn(2+) as cofactor.

It carries out the reaction 5'-deoxyadenosine + H2O + H(+) = 5'-deoxyinosine + NH4(+). The catalysed reaction is S-adenosyl-L-homocysteine + H2O + H(+) = S-inosyl-L-homocysteine + NH4(+). It catalyses the reaction S-methyl-5'-thioadenosine + H2O + H(+) = S-methyl-5'-thioinosine + NH4(+). The enzyme catalyses adenosine + H2O + H(+) = inosine + NH4(+). It participates in amino-acid biosynthesis; S-adenosyl-L-methionine biosynthesis. Catalyzes the deamination of three SAM-derived enzymatic products, namely 5'-deoxyadenosine, S-adenosyl-L-homocysteine, and 5'-methylthioadenosine, to produce the inosine analogs. Can also deaminate adenosine. The preferred substrate for this enzyme is 5'-deoxyadenosine, but all these substrates are efficiently deaminated. Likely functions in a S-adenosyl-L-methionine (SAM) recycling pathway from S-adenosyl-L-homocysteine (SAH) produced from SAM-dependent methylation reactions. May also be involved in the recycling of 5'-deoxyadenosine, whereupon the 5'-deoxyribose moiety of 5'-deoxyinosine is further metabolized to deoxyhexoses used for the biosynthesis of aromatic amino acids in methanogens. In Methanopyrus kandleri (strain AV19 / DSM 6324 / JCM 9639 / NBRC 100938), this protein is 5'-deoxyadenosine deaminase.